The chain runs to 430 residues: UPF0597 protein BDI_1130 (430 aa).

The protein belongs to the UPF0597 family.

The sequence is that of UPF0597 protein BDI_1130 from Parabacteroides distasonis (strain ATCC 8503 / DSM 20701 / CIP 104284 / JCM 5825 / NCTC 11152).